A 134-amino-acid chain; its full sequence is uncharacterized protein (134 aa).

This is an uncharacterized protein from Methanocaldococcus jannaschii (strain ATCC 43067 / DSM 2661 / JAL-1 / JCM 10045 / NBRC 100440) (Methanococcus jannaschii).